We begin with the raw amino-acid sequence, 363 residues long: Protein RecA (363 aa).

66–73 (GPESSGKT) is a binding site for ATP. A disordered region spans residues 327–363 (YGIDEKSIADRENPEKIKEKREETSEENKTDNSEKTK). A compositionally biased stretch (basic and acidic residues) spans 329–363 (IDEKSIADRENPEKIKEKREETSEENKTDNSEKTK).

Belongs to the RecA family.

The protein localises to the cytoplasm. In terms of biological role, can catalyze the hydrolysis of ATP in the presence of single-stranded DNA, the ATP-dependent uptake of single-stranded DNA by duplex DNA, and the ATP-dependent hybridization of homologous single-stranded DNAs. It interacts with LexA causing its activation and leading to its autocatalytic cleavage. The polypeptide is Protein RecA (Lactobacillus acidophilus (strain ATCC 700396 / NCK56 / N2 / NCFM)).